The chain runs to 165 residues: Putative L,D-transpeptidase YkuD (165 aa).

The 45-residue stretch at 2–46 folds into the LysM domain; it reads LMYQVKPGETLESIAADFRTTRQALLQANPGLNGGQVSAGQSIII. The 108-residue stretch at 57 to 164 folds into the L,D-TPase catalytic domain; that stretch reads YRIAVSLNGR…VPNGTRVSIT (108 aa). His124 (proton donor/acceptor) is an active-site residue. Cys140 acts as the Nucleophile in catalysis.

It belongs to the YkuD family. As to quaternary structure, monomer.

The protein localises to the spore wall. The protein operates within cell wall biogenesis; peptidoglycan biosynthesis. Probable enzyme that may play an important role in cell wall biology. In Bacillus licheniformis (strain ATCC 14580 / DSM 13 / JCM 2505 / CCUG 7422 / NBRC 12200 / NCIMB 9375 / NCTC 10341 / NRRL NRS-1264 / Gibson 46), this protein is Putative L,D-transpeptidase YkuD.